A 200-amino-acid polypeptide reads, in one-letter code: NAD(P)H dehydrogenase (quinone) (200 aa).

Positions 4-190 (VLVLYYSTYG…DGARFQGRLV (187 aa)) constitute a Flavodoxin-like domain. Residues 10-15 (STYGHL) and 78-80 (TRF) each bind FMN. Tyr-12 contributes to the NAD(+) binding site. Trp-98 is a binding site for substrate. FMN-binding positions include 113–119 (STATQHG) and His-134.

Belongs to the WrbA family. FMN is required as a cofactor.

The enzyme catalyses a quinone + NADH + H(+) = a quinol + NAD(+). It catalyses the reaction a quinone + NADPH + H(+) = a quinol + NADP(+). In Acidovorax ebreus (strain TPSY) (Diaphorobacter sp. (strain TPSY)), this protein is NAD(P)H dehydrogenase (quinone).